Consider the following 249-residue polypeptide: 3-deoxy-manno-octulosonate cytidylyltransferase (249 aa).

Belongs to the KdsB family.

The protein resides in the cytoplasm. The enzyme catalyses 3-deoxy-alpha-D-manno-oct-2-ulosonate + CTP = CMP-3-deoxy-beta-D-manno-octulosonate + diphosphate. The protein operates within nucleotide-sugar biosynthesis; CMP-3-deoxy-D-manno-octulosonate biosynthesis; CMP-3-deoxy-D-manno-octulosonate from 3-deoxy-D-manno-octulosonate and CTP: step 1/1. It functions in the pathway bacterial outer membrane biogenesis; lipopolysaccharide biosynthesis. In terms of biological role, activates KDO (a required 8-carbon sugar) for incorporation into bacterial lipopolysaccharide in Gram-negative bacteria. The protein is 3-deoxy-manno-octulosonate cytidylyltransferase of Aliivibrio fischeri (strain ATCC 700601 / ES114) (Vibrio fischeri).